Consider the following 389-residue polypeptide: Chalcone synthase 3 (389 aa).

Cys-164 is an active-site residue.

Belongs to the thiolase-like superfamily. Chalcone/stilbene synthases family.

The catalysed reaction is (E)-4-coumaroyl-CoA + 3 malonyl-CoA + 3 H(+) = 2',4,4',6'-tetrahydroxychalcone + 3 CO2 + 4 CoA. It participates in secondary metabolite biosynthesis; flavonoid biosynthesis. Its function is as follows. The primary product of this enzyme is 4,2',4',6'-tetrahydroxychalcone (also termed naringenin-chalcone or chalcone) which can under specific conditions spontaneously isomerize into naringenin. This chain is Chalcone synthase 3 (CHS3), found in Pisum sativum (Garden pea).